We begin with the raw amino-acid sequence, 555 residues long: Probable beta-glucosidase btgE (555 aa).

The signal sequence occupies residues 1 to 18 (MRGAILATAAAFAGTAVA). 2 disordered regions span residues 92–114 (TSSA…VTLP) and 263–290 (TTSA…PTGA). Over residues 263 to 288 (TTSAASTTTAVPSSSTTTSSATSVPT) the composition is skewed to low complexity. Glutamate 392 (proton donor) is an active-site residue. The active-site Nucleophile is glutamate 488.

It belongs to the glycosyl hydrolase 17 family.

Its subcellular location is the secreted. The protein localises to the cell wall. It catalyses the reaction Hydrolysis of terminal, non-reducing beta-D-glucosyl residues with release of beta-D-glucose.. The protein operates within glycan metabolism; cellulose degradation. In terms of biological role, beta-glucosidases are one of a number of cellulolytic enzymes involved in the degradation of cellulosic biomass. Catalyzes the last step releasing glucose from the inhibitory cellobiose. In Emericella nidulans (strain FGSC A4 / ATCC 38163 / CBS 112.46 / NRRL 194 / M139) (Aspergillus nidulans), this protein is Probable beta-glucosidase btgE (btgE).